Reading from the N-terminus, the 233-residue chain is Enolase-phosphatase E1 (233 aa).

Positions 16 and 18 each coordinate Mg(2+). Substrate is bound by residues 131-132 and K167; that span reads SS. D193 is a binding site for Mg(2+).

This sequence belongs to the HAD-like hydrolase superfamily. MasA/MtnC family. As to quaternary structure, monomer. Requires Mg(2+) as cofactor.

It is found in the cytoplasm. Its subcellular location is the nucleus. It catalyses the reaction 5-methylsulfanyl-2,3-dioxopentyl phosphate + H2O = 1,2-dihydroxy-5-(methylsulfanyl)pent-1-en-3-one + phosphate. Its pathway is amino-acid biosynthesis; L-methionine biosynthesis via salvage pathway; L-methionine from S-methyl-5-thio-alpha-D-ribose 1-phosphate: step 3/6. The protein operates within amino-acid biosynthesis; L-methionine biosynthesis via salvage pathway; L-methionine from S-methyl-5-thio-alpha-D-ribose 1-phosphate: step 4/6. Functionally, bifunctional enzyme that catalyzes the enolization of 2,3-diketo-5-methylthiopentyl-1-phosphate (DK-MTP-1-P) into the intermediate 2-hydroxy-3-keto-5-methylthiopentenyl-1-phosphate (HK-MTPenyl-1-P), which is then dephosphorylated to form the acireductone 1,2-dihydroxy-3-keto-5-methylthiopentene (DHK-MTPene). The sequence is that of Enolase-phosphatase E1 from Meyerozyma guilliermondii (strain ATCC 6260 / CBS 566 / DSM 6381 / JCM 1539 / NBRC 10279 / NRRL Y-324) (Yeast).